Reading from the N-terminus, the 29-residue chain is Cyclotide mela-2 (29 aa).

Positions 1-29 (GKPTCGETCFKGKCYTPGCTCSYPLCKKD) form a cross-link, cyclopeptide (Gly-Asp). Intrachain disulfides connect cysteine 5–cysteine 19, cysteine 9–cysteine 21, and cysteine 14–cysteine 26.

Post-translationally, this is a cyclic peptide. In terms of processing, contains 3 disulfide bonds.

Probably participates in a plant defense mechanism (Potential). Binds to and induces leakage in phospholipd membranes, particularly ones containing 1-palmitoyl-2-oleophosphatidylethanolamine (POPE). In vitro, displays cytotoxicity against cultured cells but no hemolytic activity towards fresh erythrocytes. Not active against Gram-negative bacterium E.coli ATCC 25922 or Gram-positive bacterium S.aureus ATCC 25923 up to a concentration of 64 uM. The protein is Cyclotide mela-2 of Melicytus latifolius (Norfolk Island mahoe).